A 192-amino-acid chain; its full sequence is Large ribosomal subunit protein uL3 (192 aa).

Belongs to the universal ribosomal protein uL3 family. Part of the 50S ribosomal subunit. Forms a cluster with proteins L14 and L19.

One of the primary rRNA binding proteins, it binds directly near the 3'-end of the 23S rRNA, where it nucleates assembly of the 50S subunit. The sequence is that of Large ribosomal subunit protein uL3 (rplC) from Helicobacter hepaticus (strain ATCC 51449 / 3B1).